Consider the following 507-residue polypeptide: MEELQRYFEIDRFRQQCFIYPFLFQEYIYALAHYYALNGSIFYETMENFGYDNKSSSLIVKRLITRMHRQNRLIISINDSNQNRFIGHGKNLYTQTVSEGFAVIMEIPFSLQLVFSFEEKEITKSHNLRSIHSIFPFFEDKLSHLNHVSHILIPYPAHLEILVQILRSCIQDAPSLHLLRFFLHDYQNSNSLKARKKSIFVCSKENRRFFLFLYNIHVYECESVFVFLRKQSFHLRSTSFRTVLERTHFYGKIEHLVVVLRNDFQKTLWMFKDPFMHYVRYQGNSLLASKGTHLRMKKWKSYLVHFWQSHFYLWSQPNRIHINQLYNHSFYFMSYLLSVRQNSSAVRSQMLENSFLIDTSIKKFETLVPTIPLIGLLAKAKFCNVFGHPISKPARADSSDSDIISRFGRIYRNLSHYYSGSSKKQTLYRIKYILRLSCARTLARKHKSTARAFLKELGSPFLEEFLMEEEQVLSLIFPRTPSPSYRSHRERIWFLDIICINILTNHV.

This sequence belongs to the intron maturase 2 family. MatK subfamily.

Its subcellular location is the plastid. It is found in the chloroplast. In terms of biological role, usually encoded in the trnK tRNA gene intron. Probably assists in splicing its own and other chloroplast group II introns. This Annona muricata (Soursop) protein is Maturase K.